Consider the following 189-residue polypeptide: Peptidyl-tRNA hydrolase (189 aa).

TRNA is bound at residue Tyr14. The active-site Proton acceptor is the His19. TRNA is bound by residues Phe61, Asn63, and Asn109.

It belongs to the PTH family. Monomer.

It localises to the cytoplasm. The catalysed reaction is an N-acyl-L-alpha-aminoacyl-tRNA + H2O = an N-acyl-L-amino acid + a tRNA + H(+). Hydrolyzes ribosome-free peptidyl-tRNAs (with 1 or more amino acids incorporated), which drop off the ribosome during protein synthesis, or as a result of ribosome stalling. Functionally, catalyzes the release of premature peptidyl moieties from peptidyl-tRNA molecules trapped in stalled 50S ribosomal subunits, and thus maintains levels of free tRNAs and 50S ribosomes. This Sulfurovum sp. (strain NBC37-1) protein is Peptidyl-tRNA hydrolase.